The following is a 22-amino-acid chain: thr operon leader peptide (22 aa).

Residues 1 to 22 (MRNISLTTTIITTTDTTGNGAG) form a disordered region. Residues 7–22 (TTTIITTTDTTGNGAG) show a composition bias toward low complexity.

It belongs to the thr operon leader peptide family.

Functionally, this protein is involved in control of the biosynthesis of threonine. The protein is thr operon leader peptide of Serratia marcescens.